A 173-amino-acid polypeptide reads, in one-letter code: Inorganic pyrophosphatase (173 aa).

3 residues coordinate substrate: K29, R43, and Y55. D65, D70, and D102 together coordinate Mg(2+). Y141 contacts substrate.

This sequence belongs to the PPase family. Homohexamer. Mg(2+) serves as cofactor.

It is found in the cytoplasm. The enzyme catalyses diphosphate + H2O = 2 phosphate + H(+). Functionally, catalyzes the hydrolysis of inorganic pyrophosphate (PPi) forming two phosphate ions. The polypeptide is Inorganic pyrophosphatase (Gluconobacter oxydans (strain 621H) (Gluconobacter suboxydans)).